The following is an 83-amino-acid chain: Small ribosomal subunit protein eS21 (83 aa).

This sequence belongs to the eukaryotic ribosomal protein eS21 family. As to quaternary structure, component of the 40S small ribosomal subunit. Interacts with sta.

It is found in the cytoplasm. Its subcellular location is the cytosol. The protein resides in the rough endoplasmic reticulum. This Ceratitis capitata (Mediterranean fruit fly) protein is Small ribosomal subunit protein eS21 (RpS21).